Here is a 710-residue protein sequence, read N- to C-terminus: Lactoperoxidase (710 aa).

The first 23 residues, 1 to 23 (MKVLLHLPALLASLTLLQTAASA), serve as a signal peptide directing secretion. Positions 24–80 (SDDPTAETDIIHDTVEEVKVWVNKAFLDSRDRLKMAMTTKIHSTRHLSDYLKHAKGR) are excised as a propeptide. A disulfide bridge connects residues Cys-130 and Cys-143. Asp-223 is a heme b binding site. His-224 serves as the catalytic Proton acceptor. Ca(2+) is bound at residue Asp-225. 2 disulfides stabilise this stretch: Cys-244-Cys-254 and Cys-248-Cys-272. Thr-299, Phe-301, Asp-303, and Ser-305 together coordinate Ca(2+). Ser-313 carries the post-translational modification Phosphoserine. The cysteines at positions 352 and 363 are disulfide-linked. Glu-373 and His-466 together coordinate heme b. Residue Tyr-480 is modified to 3'-nitrotyrosine. 2 cysteine pairs are disulfide-bonded: Cys-571–Cys-628 and Cys-669–Cys-694.

It belongs to the peroxidase family. Requires Ca(2+) as cofactor. It depends on heme b as a cofactor. As to expression, expressed in the colon, including colonocytes and mucin-containing goblet cells. Not detected in the ileum.

The protein localises to the secreted. It localises to the cytoplasm. It carries out the reaction 2 a phenolic donor + H2O2 = 2 a phenolic radical donor + 2 H2O. The catalysed reaction is thiocyanate + H2O2 + H(+) = hypothiocyanous acid + H2O. The enzyme catalyses iodide + H2O2 = hypoiodite + H2O. Heme-containing oxidoreductase which catalyzes the conversion of thiocyanate (SCN(-)) into antimicrobial agent hypothiocyanous acid (OSCN(-)) in the presence of hydrogen peroxide (H2O2). Also involved in the conversion of iodide (I(-)) into hypoiodite (IO(-)) in the presence of H2O2. Responsible for the inactivation of a wide range of micro-organisms and hence, important component of defense mechanism. May be implicated in airway host defense against infection. May contribute to maintaining an appropriate H2O2 cellular level, therefore protecting cells from H2O2-caused injuries and inflammation. This Mus musculus (Mouse) protein is Lactoperoxidase.